Reading from the N-terminus, the 174-residue chain is MDNGIFIVVTIFIVNILYVTIYTVRLLLTMKGYRYLAALSSVFEMIIYVVALSLVLDNLNNIANVLAYAVGFGVGIIVGMKIEERIALGYITVNVITKEYNLDLPNQIRDLGYGVTSWLASGRDGERMMLEILTQRKNERKLYKHIIEIDNGAFIVSSEPKQIHGGFWVKQVRK.

Transmembrane regions (helical) follow at residues 4–24 (GIFI…IYTV), 36–56 (LAAL…SLVL), and 62–82 (IANV…GMKI).

This sequence belongs to the UPF0316 family.

The protein localises to the cell membrane. In Listeria monocytogenes serovar 1/2a (strain ATCC BAA-679 / EGD-e), this protein is UPF0316 protein lmo1776.